Reading from the N-terminus, the 292-residue chain is Mycothiol acetyltransferase (292 aa).

2 N-acetyltransferase domains span residues 13–168 (ALDR…KWLQ) and 159–292 (KSVA…VYEK). Residue E40 participates in 1D-myo-inositol 2-(L-cysteinylamino)-2-deoxy-alpha-D-glucopyranoside binding. 77–79 (LAV) is a binding site for acetyl-CoA. Residues E179, K218, and E226 each contribute to the 1D-myo-inositol 2-(L-cysteinylamino)-2-deoxy-alpha-D-glucopyranoside site. Acetyl-CoA is bound by residues 230–232 (VGL) and 237–243 (RGRGLGD). 1D-myo-inositol 2-(L-cysteinylamino)-2-deoxy-alpha-D-glucopyranoside is bound at residue Y264.

This sequence belongs to the acetyltransferase family. MshD subfamily. Monomer.

It catalyses the reaction 1D-myo-inositol 2-(L-cysteinylamino)-2-deoxy-alpha-D-glucopyranoside + acetyl-CoA = mycothiol + CoA + H(+). Its function is as follows. Catalyzes the transfer of acetyl from acetyl-CoA to desacetylmycothiol (Cys-GlcN-Ins) to form mycothiol. In Corynebacterium glutamicum (strain ATCC 13032 / DSM 20300 / JCM 1318 / BCRC 11384 / CCUG 27702 / LMG 3730 / NBRC 12168 / NCIMB 10025 / NRRL B-2784 / 534), this protein is Mycothiol acetyltransferase.